The primary structure comprises 33 residues: Ranatuerin-1T (33 aa).

The cysteines at positions 27 and 33 are disulfide-linked.

In terms of tissue distribution, expressed by the skin glands.

It is found in the secreted. Antibacterial activity against Gram-positive bacterium S.aureus and Gram-negative bacterium E.coli. No activity against C.albicans. The polypeptide is Ranatuerin-1T (Rana temporaria (European common frog)).